The sequence spans 191 residues: Protein UL140 (191 aa).

A helical transmembrane segment spans residues 28–48 (TLVVFGFIVTLLFFLFMLYFW).

It is found in the host membrane. This Homo sapiens (Human) protein is Protein UL140 (UL140).